We begin with the raw amino-acid sequence, 847 residues long: Acyl-homoserine lactone acylase QuiP (847 aa).

A signal peptide spans 1–26; the sequence is MASPAFMRFLPRCGAAAAFGTLLGLA. Ser-265 serves as the catalytic Nucleophile.

Belongs to the peptidase S45 family. Heterodimer of an alpha subunit and a beta subunit processed from the same precursor.

The protein resides in the periplasm. The catalysed reaction is an N-acyl-L-homoserine lactone + H2O = L-homoserine lactone + a carboxylate. In terms of biological role, catalyzes the deacylation of acyl-homoserine lactone (AHL or acyl-HSL), releasing homoserine lactone (HSL) and the corresponding fatty acid. Possesses a specificity for the degradation of long-chain acyl-HSLs (side chains of seven or more carbons in length). Appears to be the acyl-HSL acylase that underlies the ability of P.aeruginosa to degrade and utilize certain acyl-HSLs as growth nutrients, including one of its own quorum signals, 3-oxo-C12-HSL. Is thought to have a role in quorum quenching. This is Acyl-homoserine lactone acylase QuiP (quiP) from Pseudomonas aeruginosa (strain ATCC 15692 / DSM 22644 / CIP 104116 / JCM 14847 / LMG 12228 / 1C / PRS 101 / PAO1).